The chain runs to 119 residues: Beta-2-microglobulin (119 aa).

Positions 1-20 (MARFVVVALLVLLSVSDLEA) are cleaved as a signal peptide. Residues 25-114 (PKIQVYSRYP…VTFLTPKTVK (90 aa)) form the Ig-like C1-type domain. Cysteines 45 and 100 form a disulfide.

It belongs to the beta-2-microglobulin family. In terms of assembly, heterodimer of an alpha chain and a beta chain. Beta-2-microglobulin is the beta-chain of major histocompatibility complex class I molecules.

It localises to the secreted. Component of the class I major histocompatibility complex (MHC). Involved in the presentation of peptide antigens to the immune system. This Leontocebus fuscicollis (Brown-mantled tamarin) protein is Beta-2-microglobulin (B2M).